We begin with the raw amino-acid sequence, 749 residues long: Fibronectin type III and SPRY domain-containing protein 2 (749 aa).

Positions 205-317 form a coiled coil; it reads LNEALESAKD…TIEEMCHEEK (113 aa). Fibronectin type-III domains follow at residues 375-470 and 471-564; these read PVIN…TAPS and PPII…TIGS. A B30.2/SPRY domain is found at 546–744; sequence NMGGPSVRSE…KVHNGISMPK (199 aa).

In terms of assembly, interacts with CMYA5. In cardiac muscles, identified in a complex composed of FSD2, CMYA5 and RYR2.

The protein resides in the nucleus. Its subcellular location is the sarcoplasmic reticulum. The protein localises to the cytoplasm. It is found in the perinuclear region. This chain is Fibronectin type III and SPRY domain-containing protein 2 (FSD2), found in Homo sapiens (Human).